Consider the following 69-residue polypeptide: Protein SlyX homolog (69 aa).

The protein belongs to the SlyX family.

In Pseudomonas aeruginosa (strain LESB58), this protein is Protein SlyX homolog.